A 92-amino-acid polypeptide reads, in one-letter code: Small ribosomal subunit protein bS18 (92 aa).

It belongs to the bacterial ribosomal protein bS18 family. In terms of assembly, part of the 30S ribosomal subunit. Forms a tight heterodimer with protein bS6.

Its function is as follows. Binds as a heterodimer with protein bS6 to the central domain of the 16S rRNA, where it helps stabilize the platform of the 30S subunit. This chain is Small ribosomal subunit protein bS18, found in Chlorobium chlorochromatii (strain CaD3).